An 864-amino-acid polypeptide reads, in one-letter code: uncharacterized protein (864 aa).

This is an uncharacterized protein from Rickettsia typhi (strain ATCC VR-144 / Wilmington).